Here is a 467-residue protein sequence, read N- to C-terminus: Light-independent protochlorophyllide reductase subunit N (467 aa).

[4Fe-4S] cluster-binding residues include Cys-24, Cys-49, and Cys-109.

The protein belongs to the BchN/ChlN family. In terms of assembly, protochlorophyllide reductase is composed of three subunits; ChlL, ChlN and ChlB. Forms a heterotetramer of two ChlB and two ChlN subunits. Requires [4Fe-4S] cluster as cofactor.

The catalysed reaction is chlorophyllide a + oxidized 2[4Fe-4S]-[ferredoxin] + 2 ADP + 2 phosphate = protochlorophyllide a + reduced 2[4Fe-4S]-[ferredoxin] + 2 ATP + 2 H2O. It functions in the pathway porphyrin-containing compound metabolism; chlorophyll biosynthesis (light-independent). In terms of biological role, component of the dark-operative protochlorophyllide reductase (DPOR) that uses Mg-ATP and reduced ferredoxin to reduce ring D of protochlorophyllide (Pchlide) to form chlorophyllide a (Chlide). This reaction is light-independent. The NB-protein (ChlN-ChlB) is the catalytic component of the complex. The protein is Light-independent protochlorophyllide reductase subunit N of Leptolyngbya boryana (Plectonema boryanum).